We begin with the raw amino-acid sequence, 594 residues long: Probable ABC transporter-binding protein DR_1571 (594 aa).

The first 18 residues, 1 to 18 (MKKVMMLALALGASTSLA), serve as a signal peptide directing secretion.

This sequence belongs to the bacterial solute-binding protein 5 family.

Its function is as follows. Probably part of a binding-protein-dependent transport system. The polypeptide is Probable ABC transporter-binding protein DR_1571 (Deinococcus radiodurans (strain ATCC 13939 / DSM 20539 / JCM 16871 / CCUG 27074 / LMG 4051 / NBRC 15346 / NCIMB 9279 / VKM B-1422 / R1)).